The following is a 450-amino-acid chain: Succinate-semialdehyde dehydrogenase (450 aa).

119–120 (WN) is an NADP(+) binding site. Position 128 (arginine 128) interacts with substrate. NADP(+) contacts are provided by residues 143-146 (KPAK) and 197-198 (GS). Catalysis depends on glutamate 219, which acts as the Proton acceptor. Leucine 220 contributes to the NADP(+) binding site. Positions 247 and 253 each coordinate substrate. Cysteine 253 functions as the Nucleophile in the catalytic mechanism. NADP(+) is bound at residue glutamate 350. Substrate is bound at residue serine 410.

It belongs to the aldehyde dehydrogenase family. In terms of assembly, homodimer.

It catalyses the reaction succinate semialdehyde + NAD(+) + H2O = succinate + NADH + 2 H(+). The enzyme catalyses succinate semialdehyde + NADP(+) + H2O = succinate + NADPH + 2 H(+). It participates in alkaloid degradation; nicotine degradation. Its function is as follows. Catalyzes the NAD(P)(+)-dependent oxidation of succinate semialdehyde to succinate, which may enter the citric acid cycle. Is involved in the catabolism of 4-methylaminobutanoate produced from nicotine. Acts preferentially with NADP(+) as cosubstrate but can also use NAD(+). To a lesser extent, is active also towards butyraldehyde (8.5% of the activity observed with succinate semialdehyde) and propionaldehyde (1.6% of the activity observed with succinate semialdehyde) as substrates. The polypeptide is Succinate-semialdehyde dehydrogenase (sad) (Paenarthrobacter nicotinovorans (Arthrobacter nicotinovorans)).